The chain runs to 189 residues: Peptidyl-tRNA hydrolase (189 aa).

Tyr15 provides a ligand contact to tRNA. The active-site Proton acceptor is the His20. Positions 66, 68, and 114 each coordinate tRNA.

Belongs to the PTH family. Monomer.

The protein resides in the cytoplasm. The enzyme catalyses an N-acyl-L-alpha-aminoacyl-tRNA + H2O = an N-acyl-L-amino acid + a tRNA + H(+). Hydrolyzes ribosome-free peptidyl-tRNAs (with 1 or more amino acids incorporated), which drop off the ribosome during protein synthesis, or as a result of ribosome stalling. Functionally, catalyzes the release of premature peptidyl moieties from peptidyl-tRNA molecules trapped in stalled 50S ribosomal subunits, and thus maintains levels of free tRNAs and 50S ribosomes. The protein is Peptidyl-tRNA hydrolase of Streptococcus pneumoniae (strain JJA).